The following is a 261-amino-acid chain: Gap junction beta-6 protein (261 aa).

Residues 1 to 22 (MDWGTLHTFIGGVNKHSTSIGK) lie on the Cytoplasmic side of the membrane. The chain crosses the membrane as a helical span at residues 23–45 (VWITVIFIFRVMILVVAAQEVWG). Residues 46-75 (DEQEDFVCNTLQPGCKNVCYDHFFPVSHIR) are Extracellular-facing. A helical transmembrane segment spans residues 76-98 (LWALQLIFVSTPALLVAMHVAYY). The Cytoplasmic portion of the chain corresponds to 99-131 (RHETTRKFRRGEKRNDFKDIEDIKKQKVRIEGS). A helical membrane pass occupies residues 132–154 (LWWTYTSSIFFRIIFEAAFMYVF). Residues 155–192 (YFLYNGYHLPWVLKCGIDPCPNLVDCFISRPTEKTVFT) are Extracellular-facing. The chain crosses the membrane as a helical span at residues 193-215 (IFMISASVICMLLNVAELCYLLL). The Cytoplasmic segment spans residues 216-261 (KVCFRRSKRAQTQKNHPNHALKESKQNEMNELISDSGQNAITGFPS).

This sequence belongs to the connexin family. Beta-type (group I) subfamily. In terms of assembly, a connexon is composed of a hexamer of connexins. Interacts with CNST.

It localises to the cell membrane. The protein resides in the cell junction. Its subcellular location is the gap junction. One gap junction consists of a cluster of closely packed pairs of transmembrane channels, the connexons, through which materials of low MW diffuse from one cell to a neighboring cell. This chain is Gap junction beta-6 protein (GJB6), found in Homo sapiens (Human).